The primary structure comprises 100 residues: Elicitin Vex2 (100 aa).

3 disulfide bridges follow: Cys-3/Cys-71, Cys-27/Cys-56, and Cys-51/Cys-95.

The protein belongs to the elicitin family.

The protein resides in the secreted. Induces local and distal defense responses (incompatible hypersensitive reaction) in plants from the solanaceae and cruciferae families. Elicits leaf necrosis and causes the accumulation of pathogenesis-related proteins. Might interact with the lipidic molecules of the plasma membrane. The protein is Elicitin Vex2 of Phytopythium vexans (Damping-off fungus).